The following is a 214-amino-acid chain: Methyltransferase HEMK2 (214 aa).

Positions 29, 51, 53, 77, 103, 104, and 122 each coordinate S-adenosyl-L-homocysteine. S-adenosyl-L-methionine contacts are provided by Thr-29, Glu-51, Gly-53, Asp-77, Asp-103, Leu-104, and Asn-122. Position 122 (Asn-122) interacts with a protein.

This sequence belongs to the eukaryotic/archaeal PrmC-related family. In terms of assembly, heterodimer; heterodimerization with TRMT112 is required for S-adenosyl-L-methionine-binding. As to quaternary structure, does not interact with TRMT112. In terms of processing, ubiquitinated, leading to its degradation by the proteasome. In terms of tissue distribution, widely expressed, with highest expression in parathyroid and pituitary glands, followed by adrenal gland and kidney, and lowest expression in leukocytes and mammary gland.

It localises to the nucleus. The enzyme catalyses L-lysyl-[histone] + S-adenosyl-L-methionine = N(6)-methyl-L-lysyl-[histone] + S-adenosyl-L-homocysteine + H(+). It catalyses the reaction L-glutaminyl-[protein] + S-adenosyl-L-methionine = N(5)-methyl-L-glutaminyl-[protein] + S-adenosyl-L-homocysteine + H(+). It carries out the reaction methylarsonous acid + S-adenosyl-L-methionine = dimethylarsinate + S-adenosyl-L-homocysteine + 2 H(+). In terms of biological role, methyltransferase that can methylate proteins and, to a lower extent, arsenic. Catalytic subunit of a heterodimer with TRMT112, which monomethylates 'Lys-12' of histone H4 (H4K12me1), a modification present at the promoters of numerous genes encoding cell cycle regulators. Catalytic subunit of a heterodimer with TRMT112, which catalyzes N5-methylation of Glu residue of proteins with a Gly-Gln-Xaa-Xaa-Xaa-Arg motif. Methylates ETF1 on 'Gln-185'; ETF1 needs to be complexed to ERF3 in its GTP-bound form to be efficiently methylated. May also play a role in the modulation of arsenic-induced toxicity by mediating the conversion of monomethylarsonous acid (3+) into the less toxic dimethylarsonic acid. It however only plays a limited role in arsenic metabolism compared with AS3MT. This chain is Methyltransferase HEMK2, found in Homo sapiens (Human).